The sequence spans 738 residues: Exocyst complex component 3 (738 aa).

Residues 28–91 adopt a coiled-coil conformation; the sequence is LEKVEQYRHR…DEVERLLRGV (64 aa).

It belongs to the SEC6 family. In terms of assembly, the exocyst complex is composed of Sec3/Exoc1, Sec5/Exoc2, Sec6/Exoc3, Sec8/Exoc4, Sec10/Exoc5, Sec15/Exoc6, Exo70/Exoc7 and Exo84/Exoc8.

Its function is as follows. Component of the exocyst complex involved in the docking of exocytic vesicles with fusion sites on the plasma membrane. The sequence is that of Exocyst complex component 3 from Drosophila melanogaster (Fruit fly).